Reading from the N-terminus, the 418-residue chain is Gamma-glutamyl phosphate reductase (418 aa).

It belongs to the gamma-glutamyl phosphate reductase family.

It localises to the cytoplasm. The enzyme catalyses L-glutamate 5-semialdehyde + phosphate + NADP(+) = L-glutamyl 5-phosphate + NADPH + H(+). Its pathway is amino-acid biosynthesis; L-proline biosynthesis; L-glutamate 5-semialdehyde from L-glutamate: step 2/2. Catalyzes the NADPH-dependent reduction of L-glutamate 5-phosphate into L-glutamate 5-semialdehyde and phosphate. The product spontaneously undergoes cyclization to form 1-pyrroline-5-carboxylate. The chain is Gamma-glutamyl phosphate reductase from Colwellia psychrerythraea (strain 34H / ATCC BAA-681) (Vibrio psychroerythus).